We begin with the raw amino-acid sequence, 480 residues long: Aromatic-L-amino-acid decarboxylase (480 aa).

M1 is subject to N-acetylmethionine. Tandem repeats lie at residues K58–E115 and M118–A178. Positions K58–A178 are 2 X approximate tandem repeats. T82 is a binding site for substrate. Residues A148 and S149 each contribute to the pyridoxal 5'-phosphate site. H192 is a substrate binding site. Pyridoxal 5'-phosphate is bound by residues T246 and N300. Residue K303 is modified to N6-(pyridoxal phosphate)lysine.

It belongs to the group II decarboxylase family. In terms of assembly, homodimer. Requires pyridoxal 5'-phosphate as cofactor.

It carries out the reaction L-dopa + H(+) = dopamine + CO2. The catalysed reaction is 5-hydroxy-L-tryptophan + H(+) = serotonin + CO2. Its pathway is catecholamine biosynthesis; dopamine biosynthesis; dopamine from L-tyrosine: step 2/2. Functionally, catalyzes the decarboxylation of L-3,4-dihydroxyphenylalanine (DOPA) to dopamine and L-5-hydroxytryptophan to serotonin. This is Aromatic-L-amino-acid decarboxylase (Ddc) from Mus musculus (Mouse).